The primary structure comprises 126 residues: Small ribosomal subunit protein uS13 (126 aa).

Positions 92-126 are disordered; the sequence is HRRGLPANGQRTHTNARTRKGPRKGMLQRRPAATK. Positions 105-118 are enriched in basic residues; that stretch reads TNARTRKGPRKGML.

This sequence belongs to the universal ribosomal protein uS13 family. As to quaternary structure, part of the 30S ribosomal subunit. Forms a loose heterodimer with protein S19. Forms two bridges to the 50S subunit in the 70S ribosome.

Functionally, located at the top of the head of the 30S subunit, it contacts several helices of the 16S rRNA. In the 70S ribosome it contacts the 23S rRNA (bridge B1a) and protein L5 of the 50S subunit (bridge B1b), connecting the 2 subunits; these bridges are implicated in subunit movement. Contacts the tRNAs in the A and P-sites. This is Small ribosomal subunit protein uS13 from Sorangium cellulosum (strain So ce56) (Polyangium cellulosum (strain So ce56)).